Consider the following 704-residue polypeptide: Elongation factor G (704 aa).

The 284-residue stretch at 8-291 folds into the tr-type G domain; that stretch reads DKVRNIGIMA…TVVECLPSPV (284 aa). Residues 17–24, 90–94, and 144–147 each bind GTP; these read AHIDAGKT, DTPGH, and NKMD.

It belongs to the TRAFAC class translation factor GTPase superfamily. Classic translation factor GTPase family. EF-G/EF-2 subfamily.

Its subcellular location is the cytoplasm. Catalyzes the GTP-dependent ribosomal translocation step during translation elongation. During this step, the ribosome changes from the pre-translocational (PRE) to the post-translocational (POST) state as the newly formed A-site-bound peptidyl-tRNA and P-site-bound deacylated tRNA move to the P and E sites, respectively. Catalyzes the coordinated movement of the two tRNA molecules, the mRNA and conformational changes in the ribosome. The chain is Elongation factor G from Prosthecochloris aestuarii (strain DSM 271 / SK 413).